The following is a 260-amino-acid chain: Glutamate racemase (260 aa).

Substrate is bound by residues 14-15 and 46-47; these read DS and YG. The active-site Proton donor/acceptor is the C77. A substrate-binding site is contributed by 78–79; it reads NT. The active-site Proton donor/acceptor is C188. Residue 189-190 participates in substrate binding; sequence TH.

Belongs to the aspartate/glutamate racemases family.

It carries out the reaction L-glutamate = D-glutamate. It functions in the pathway cell wall biogenesis; peptidoglycan biosynthesis. Functionally, provides the (R)-glutamate required for cell wall biosynthesis. The polypeptide is Glutamate racemase (Clostridium perfringens (strain 13 / Type A)).